The sequence spans 155 residues: uncharacterized protein (155 aa).

The signal sequence occupies residues 1 to 23; it reads MKIRSLSRFVLASTMFASFTASA.

It to E.coli YkfB.

This is an uncharacterized protein from Escherichia coli (strain K12).